Consider the following 379-residue polypeptide: DnaJ homolog subfamily B member 14 (379 aa).

At 1–244 (MEGNRDEAEK…GHEREEERAD (244 aa)) the chain is on the cytoplasmic side. Residues 56-90 (TAGSSTHCRKPPGSSDQSKPSCGKDGTSGAGEGGK) form a disordered region. The 65-residue stretch at 108-172 (NYYEVLGVTK…EKRKQYDLTG (65 aa)) folds into the J domain. A helical transmembrane segment spans residues 245–265 (GGFSVFIQLMPIIVLILVSLL). Residues 266 to 379 (SQLMVSNPPY…ERLTSLYKGG (114 aa)) lie on the Lumenal side of the membrane.

The protein belongs to the DnaJ family. DNAJB12/DNAJB14 subfamily. In terms of assembly, interacts (via J domain) with HSPA8/Hsc70. Forms a multiprotein complex, at least composed of DNAJB12, DNAJB14, HSPA8/Hsc70 and SGTA; interaction with DNAJB14 and HSPA8/Hsc70 is direct.

The protein localises to the endoplasmic reticulum membrane. The protein resides in the nucleus membrane. Its function is as follows. Acts as a co-chaperone with HSPA8/Hsc70; required to promote protein folding and trafficking, prevent aggregation of client proteins, and promote unfolded proteins to endoplasmic reticulum-associated degradation (ERAD) pathway. Acts by determining HSPA8/Hsc70's ATPase and polypeptide-binding activities. Can also act independently of HSPA8/Hsc70: together with DNAJB12, acts as a chaperone that promotes maturation of potassium channels KCND2 and KCNH2 by stabilizing nascent channel subunits and assembling them into tetramers. While stabilization of nascent channel proteins is dependent on HSPA8/Hsc70, the process of oligomerization of channel subunits is independent of HSPA8/Hsc70. When overexpressed, forms membranous structures together with DNAJB12 and HSPA8/Hsc70 within the nucleus; the role of these structures, named DJANGOs, is still unclear. The sequence is that of DnaJ homolog subfamily B member 14 from Mus musculus (Mouse).